Consider the following 381-residue polypeptide: Cytochrome b (381 aa).

4 helical membrane passes run 34-54 (FGSHLGLCLIIQILTGLFLAM), 78-99 (WLIRNIHANGASLFFICVYLHI), 114-134 (WNIGVILLFLLMATAFVGYVL), and 179-199 (FFAFHFLLPFLILALTVIHLL). Positions 84 and 98 each coordinate heme b. 2 residues coordinate heme b: histidine 183 and histidine 197. Histidine 202 provides a ligand contact to a ubiquinone. 4 helical membrane passes run 227-247 (YKDLLGFFVMIFFLAALALFM), 289-309 (LGGVLALLFSIFILMLVPLLH), 321-341 (MTQILFWFLVANSIILTWIGG), and 348-368 (FIMVGQIASISYFSLFLIIMP).

The protein belongs to the cytochrome b family. As to quaternary structure, the cytochrome bc1 complex contains 3 respiratory subunits (MT-CYB, CYC1 and UQCRFS1), 2 core proteins (UQCRC1 and UQCRC2) and probably 6 low-molecular weight proteins. Heme b is required as a cofactor.

It is found in the mitochondrion inner membrane. Functionally, component of the ubiquinol-cytochrome c reductase complex (complex III or cytochrome b-c1 complex) that is part of the mitochondrial respiratory chain. The b-c1 complex mediates electron transfer from ubiquinol to cytochrome c. Contributes to the generation of a proton gradient across the mitochondrial membrane that is then used for ATP synthesis. This chain is Cytochrome b (mt-cyb), found in Carcharhinus porosus (Smalltail shark).